Here is a 115-residue protein sequence, read N- to C-terminus: NADH-ubiquinone oxidoreductase chain 3 (115 aa).

Transmembrane regions (helical) follow at residues 4–24 (MLILLMNIALAAILISLAFWL), 55–75 (FFLVAITFLLFDLEIALLLPL), and 86–106 (MLMTMAFILITILALGLAYEW).

It belongs to the complex I subunit 3 family. In terms of assembly, core subunit of respiratory chain NADH dehydrogenase (Complex I) which is composed of 45 different subunits. Interacts with TMEM186. Interacts with TMEM242.

It localises to the mitochondrion inner membrane. The catalysed reaction is a ubiquinone + NADH + 5 H(+)(in) = a ubiquinol + NAD(+) + 4 H(+)(out). Functionally, core subunit of the mitochondrial membrane respiratory chain NADH dehydrogenase (Complex I) which catalyzes electron transfer from NADH through the respiratory chain, using ubiquinone as an electron acceptor. Essential for the catalytic activity of complex I. This Microtus pennsylvanicus (Meadow vole) protein is NADH-ubiquinone oxidoreductase chain 3.